A 453-amino-acid chain; its full sequence is Major fimbrium subunit FimC (453 aa).

An N-terminal signal peptide occupies residues 1-28 (MKMKYFHHPSGLLPRLLLLLLLTMGAVA). Residue Cys29 is the site of N-palmitoyl cysteine attachment. Cys29 carries the S-diacylglycerol cysteine lipid modification. Positions 29-56 (CTKEDNPDQPTSDEVATVKMSLDDVEMR) are excised as a propeptide.

Belongs to the bacteroidetes fimbrillin superfamily. FimA/Mfa1 family. Fimbriae are composed of a major, structural subunit and the minor components FimC, FimD and FimE. Identified in a complex composed of FimC, FimD and FimE (in vitro). The complex interacts with host extracellular matrix proteins, including fibronectin and type I collagen. Interacts with host CXCR4.

It is found in the fimbrium. The protein resides in the cell outer membrane. Minor component of fimbriae. These long, filamentous pili are attached to the cell surface; they mediate biofilm formation, adhesion onto host cells and onto other bacteria that are part of the oral microbiome. They play an important role in invasion of periodontal tissues and are major virulence factors. FimC, FimD and FimE contribute to interaction with host CXCR4 and thereby down-regulate the TLR2-mediated host immune response. This is Major fimbrium subunit FimC from Porphyromonas gingivalis (strain ATCC 33277 / DSM 20709 / CIP 103683 / JCM 12257 / NCTC 11834 / 2561).